Consider the following 110-residue polypeptide: Large ribosomal subunit protein uL22 (110 aa).

It belongs to the universal ribosomal protein uL22 family. Part of the 50S ribosomal subunit.

Functionally, this protein binds specifically to 23S rRNA; its binding is stimulated by other ribosomal proteins, e.g. L4, L17, and L20. It is important during the early stages of 50S assembly. It makes multiple contacts with different domains of the 23S rRNA in the assembled 50S subunit and ribosome. The globular domain of the protein is located near the polypeptide exit tunnel on the outside of the subunit, while an extended beta-hairpin is found that lines the wall of the exit tunnel in the center of the 70S ribosome. The polypeptide is Large ribosomal subunit protein uL22 (Histophilus somni (strain 129Pt) (Haemophilus somnus)).